The sequence spans 318 residues: MASLKIPANIPLPEEDSEQLHKAFKGWGTNEGMIISILAHRNATQRSFIRAVYAANYNKDLLKELDGELSGDFERVVMLWTLDPTERDAYLANESTKLFTKNIWVLVEIACTRPSLEFFKTKQAYHVRYKTSLEEDVAYHTSGNIRKLLVPLVSTFRYDGNADEVNVKLARSEAKTLHKKITEKAYTDEDLIRILTTRSKAQINATLNHFKDKFGSSINKFLKEDSNDDYVQLLKTAIKCLTYPEKYFEKVLRRAINRMGTDEWALTRVVTTRAEVDLERIKEEYLRRNSVPLDRAIANDTSGDYKDMLLALLGHDHA.

Ala-2 carries the post-translational modification N-acetylalanine. 4 Annexin repeats span residues 11 to 82, 83 to 154, 168 to 239, and 243 to 314; these read PLPE…LWTL, DPTE…PLVS, KLAR…TAIK, and YPEK…ALLG. Ca(2+)-binding residues include Phe-24, Gly-26, Gly-28, and Glu-68. Residue Ser-95 is modified to Phosphoserine. Residues Thr-100 and Thr-112 each carry the phosphothreonine modification. Tyr-129 bears the Phosphotyrosine mark. The Ca(2+) site is built by Ile-256, Arg-258, and Gly-260. At Tyr-285 the chain carries Phosphotyrosine. Ser-290 is modified (phosphoserine). Asp-300 and Thr-301 together coordinate Ca(2+).

The protein belongs to the annexin (TC 1.A.31.1) family. In terms of tissue distribution, expressed in flowers.

The sequence is that of Annexin D6 (ANN6) from Arabidopsis thaliana (Mouse-ear cress).